Here is a 100-residue protein sequence, read N- to C-terminus: Urease subunit gamma (100 aa).

This sequence belongs to the urease gamma subunit family. Heterotrimer of UreA (gamma), UreB (beta) and UreC (alpha) subunits. Three heterotrimers associate to form the active enzyme.

Its subcellular location is the cytoplasm. The catalysed reaction is urea + 2 H2O + H(+) = hydrogencarbonate + 2 NH4(+). Its pathway is nitrogen metabolism; urea degradation; CO(2) and NH(3) from urea (urease route): step 1/1. The protein is Urease subunit gamma of Herpetosiphon aurantiacus (strain ATCC 23779 / DSM 785 / 114-95).